Consider the following 341-residue polypeptide: MATIKDVAKRAGVSTTTVSHVINKTRFVAEETKAAVGAAIKELHYSPSAVARSLKVNHTKSIGLLATSSEAPYFAEVIEAVENSCYSKGYTLILCNSHNNLDKQRAYLAMLAQKRVDGLLVMCSEYPDQLLGMLEDYRNIPMVVMDWGAARGDFTDSIIDNAFAGGYLAGRYLIERGHRDIGAIPGQLSRNTGGGRHQGFLKAMEEANIEVRDEWIVQGDFEPESGYKAMHQILSQKHRPTAVFCGGDIMAMGAICAADELGLRVPQDISVIGYDNVRNARYFTPALTTIHQPKERLGEMAFTMLLDRIISKREESQVIEVHPKLIERRSVADGPFIDYRR.

Residues 2 to 56 (ATIKDVAKRAGVSTTTVSHVINKTRFVAEETKAAVGAAIKELHYSPSAVARSLKV) enclose the HTH lacI-type domain. The segment at residues 4–23 (IKDVAKRAGVSTTTVSHVIN) is a DNA-binding region (H-T-H motif). A DNA-binding region spans residues 48 to 56 (SAVARSLKV). Positions 73, 190, 192, 221, and 275 each coordinate hypoxanthine.

As to quaternary structure, homodimer.

The protein operates within purine metabolism; purine nucleotide biosynthesis [regulation]. Functionally, is the main repressor of the genes involved in the de novo synthesis of purine nucleotides, regulating purB, purC, purEK, purF, purHD, purL, purMN and guaBA expression. PurR is allosterically activated to bind its cognate DNA by binding the purine corepressors, hypoxanthine or guanine, thereby effecting transcription repression. The chain is HTH-type transcriptional repressor PurR from Serratia proteamaculans (strain 568).